A 215-amino-acid polypeptide reads, in one-letter code: UPF0502 protein YceH (215 aa).

K80 carries the N6-acetyllysine modification.

The protein belongs to the UPF0502 family.

The polypeptide is UPF0502 protein YceH (Escherichia coli O127:H6 (strain E2348/69 / EPEC)).